A 920-amino-acid polypeptide reads, in one-letter code: Rho GTPase-activating protein REN1 (920 aa).

Positions 1 to 10 are enriched in polar residues; sequence MANKNAESSS. Residues 1–64 form a disordered region; the sequence is MANKNAESSS…SRGGNTVFKS (64 aa). Over residues 17-31 the composition is skewed to low complexity; it reads QPNQQQQQQPPIANE. Residues 45–64 are compositionally biased toward polar residues; sequence PAQSGNTDSRSRGGNTVFKS. Residues 60–167 enclose the PH domain; sequence TVFKSGPLSI…WKAALENALT (108 aa). Residues 213–412 form the Rho-GAP domain; that stretch reads LALEDVDGAP…TLLEEYESIF (200 aa). 3 disordered regions span residues 417-592, 719-825, and 837-920; these read LSPG…NLSM, RLGH…ALSK, and RSQI…TFSR. The span at 434–463 shows a compositional bias: acidic residues; it reads EGSDDEEYDDDDDGSQGSEDYTDEEEDLEN. Polar residues predominate over residues 464-473; sequence ESNGSYSESA. Basic and acidic residues-rich tracts occupy residues 475-491, 499-509, and 520-532; these read SEDKYADSIDPDDHKIN, KSPKRSKEPKK, and PRHDDGKKDEDIV. Residues 555–568 show a composition bias toward polar residues; sequence SSTSDVASDTQKPS. The segment covering 577–586 has biased composition (basic residues); the sequence is SKRHWGRTPG. A coiled-coil region spans residues 598 to 728; the sequence is SVEVDEDNAD…RLGHHDGKAS (131 aa). 2 stretches are compositionally biased toward basic and acidic residues: residues 734–768 and 776–788; these read ASKESRKLPEHNAKMKEKQKDTEAASTHISERSTS and RENETEKQQDSRS. The span at 814 to 825 shows a compositional bias: low complexity; the sequence is EGSTTTTSALSK. Composition is skewed to polar residues over residues 854-864 and 872-885; these read GQPSPTSGQNR and GSGSNQDPDSSKLQ. The span at 889–903 shows a compositional bias: basic and acidic residues; it reads ILDRGRSENGGDRGR. Polar residues predominate over residues 910–920; that stretch reads HPNTTPRTFSR.

As to quaternary structure, interacts with ARAC11/ROP1. In terms of tissue distribution, expressed in pollen and pollen tubes.

Its subcellular location is the cell membrane. Its function is as follows. Acts as a GTPase activator for the Rac-type GTPase by converting it to an inactive GDP-bound state. Maintains the global inactivation of ARAC11/ROP1 at the apex in pollen tubes in order to regulate the polar cell growth. This Arabidopsis thaliana (Mouse-ear cress) protein is Rho GTPase-activating protein REN1 (REN1).